The following is a 323-amino-acid chain: Sphingolipid delta(4)-desaturase/C4-monooxygenase DES2 (323 aa).

The N-myristoyl glycine moiety is linked to residue Gly-2. 2 helical membrane passes run 41 to 61 (PNIKWTVLGMVLVQVLACWLV) and 68 to 88 (WLLFWAYAFGGCINHSLTLAI). Residues 89 to 93 (HDISH) carry the Histidine box-1 motif. The required for C4-hydroxylase activity stretch occupies residues 95-99 (TAFGT). The Histidine box-2 motif lies at 128-132 (HVDHH). A helical membrane pass occupies residues 200 to 220 (IFALWGIKAIVYLLASSLLGL). The short motif at 259 to 263 (HVEHH) is the Histidine box-3 element.

It belongs to the fatty acid desaturase type 1 family. DEGS subfamily.

It is found in the endoplasmic reticulum membrane. The catalysed reaction is a dihydroceramide + 2 Fe(II)-[cytochrome b5] + O2 + 2 H(+) = a phytoceramide + 2 Fe(III)-[cytochrome b5] + H2O. It carries out the reaction an N-acylsphinganine + 2 Fe(II)-[cytochrome b5] + O2 + 2 H(+) = an N-acylsphing-4-enine + 2 Fe(III)-[cytochrome b5] + 2 H2O. It catalyses the reaction N-octanoylsphinganine + 2 Fe(II)-[cytochrome b5] + O2 + 2 H(+) = N-octanoyl-4-hydroxysphinganine + 2 Fe(III)-[cytochrome b5] + H2O. The enzyme catalyses an N-acylsphinganine + 2 Fe(II)-[cytochrome b5] + O2 + 2 H(+) = an N-acyl-(4R)-4-hydroxysphinganine + 2 Fe(III)-[cytochrome b5] + H2O. The protein operates within membrane lipid metabolism; sphingolipid biosynthesis. Functionally, bifunctional enzyme which acts both as a sphingolipid delta(4)-desaturase and a sphingolipid C4-monooxygenase. This Rattus norvegicus (Rat) protein is Sphingolipid delta(4)-desaturase/C4-monooxygenase DES2.